The following is a 242-amino-acid chain: Ubiquinone biosynthesis O-methyltransferase (242 aa).

S-adenosyl-L-methionine-binding residues include Arg44, Gly64, Asp85, and Met129.

The protein belongs to the methyltransferase superfamily. UbiG/COQ3 family.

The catalysed reaction is a 3-demethylubiquinol + S-adenosyl-L-methionine = a ubiquinol + S-adenosyl-L-homocysteine + H(+). It catalyses the reaction a 3-(all-trans-polyprenyl)benzene-1,2-diol + S-adenosyl-L-methionine = a 2-methoxy-6-(all-trans-polyprenyl)phenol + S-adenosyl-L-homocysteine + H(+). It functions in the pathway cofactor biosynthesis; ubiquinone biosynthesis. O-methyltransferase that catalyzes the 2 O-methylation steps in the ubiquinone biosynthetic pathway. The protein is Ubiquinone biosynthesis O-methyltransferase of Salmonella arizonae (strain ATCC BAA-731 / CDC346-86 / RSK2980).